The following is a 688-amino-acid chain: MWCIVLFSLLAWVYAEPTMYGEILSPNYPQAYPSEVEKSWDIEVPEGYGIHLYFTHLDIELSENCAYDSVQIISGDTEEGRLCGQRSSNNPHSPIVEEFQVPYNKLQVIFKSDFSNEERFTGFAAYYVATDINECTDFVDVPCSHFCNNFIGGYFCSCPPEYFLHDDMKNCGVNCSGDVFTALIGEIASPNYPKPYPENSRCEYQIRLEKGFQVVVTLRREDFDVEAADSAGNCLDSLVFVAGDRQFGPYCGHGFPGPLNIETKSNALDIIFQTDLTGQKKGWKLRYHGDPMPCPKEDTPNSVWEPAKAKYVFRDVVQITCLDGFEVVEGRVGATSFYSTCQSNGKWSNSKLKCQPVDCGIPESIENGKVEDPESTLFGSVIRYTCEEPYYYMENGGGGEYHCAGNGSWVNEVLGPELPKCVPVCGVPREPFEEKQRIIGGSDADIKNFPWQVFFDNPWAGGALINEYWVLTAAHVVEGNREPTMYVGSTSVQTSRLAKSKMLTPEHVFIHPGWKLLEVPEGRTNFDNDIALVRLKDPVKMGPTVSPICLPGTSSDYNLMDGDLGLISGWGRTEKRDRAVRLKAARLPVAPLRKCKEVKVEKPTADAEAYVFTPNMICAGGEKGMDSCKGDSGGAFAVQDPNDKTKFYAAGLVSWGPQCGTYGLYTRVKNYVDWIMKTMQENSTPRED.

Positions 1–15 are cleaved as a signal peptide; that stretch reads MWCIVLFSLLAWVYA. The 115-residue stretch at 16 to 130 folds into the CUB 1 domain; the sequence is EPTMYGEILS…TGFAAYYVAT (115 aa). Positions 60, 68, 113, 131, 132, and 134 each coordinate Ca(2+). A disulfide bridge links Cys65 with Cys83. Positions 131–172 constitute an EGF-like; calcium-binding domain; sequence DINECTDFVDVPCSHFCNNFIGGYFCSCPPEYFLHDDMKNCG. Cystine bridges form between Cys135/Cys147, Cys143/Cys156, and Cys158/Cys171. Positions 149, 150, and 153 each coordinate Ca(2+). Asn149 is subject to (3R)-3-hydroxyasparagine. The N-linked (GlcNAc...) asparagine glycan is linked to Asn174. Cys175 and Cys202 are joined by a disulfide. The 116-residue stretch at 175-290 folds into the CUB 2 domain; it reads CSGDVFTALI…KGWKLRYHGD (116 aa). Residues Glu226, Asp236, Asp275, Gly278, and Gln279 each contribute to the Ca(2+) site. Cys234 and Cys251 are disulfide-bonded. Sushi domains follow at residues 292-356 and 357-423; these read MPCP…KCQP and VDCG…KCVP. Intrachain disulfides connect Cys294–Cys341, Cys321–Cys354, Cys359–Cys403, Cys386–Cys421, Cys425–Cys549, Cys595–Cys618, and Cys628–Cys659. N-linked (GlcNAc...) asparagine glycosylation occurs at Asn406. In terms of domain architecture, Peptidase S1 spans 438-680; it reads IIGGSDADIK…YVDWIMKTMQ (243 aa). Active-site charge relay system residues include His475 and Asp529. The active-site Charge relay system is Ser632.

It belongs to the peptidase S1 family. In terms of assembly, core component of the complement C1 complex, a calcium-dependent complex composed of 1 molecule of the C1Q subcomplex, 2 molecules of C1R and 2 molecules of C1S. The C1Q subcomplex is composed 18 subunits: 3 chains of C1QA, C1QB, and C1QC trimerize to form 6 collagen-like triple helices connected to six globular ligand-recognition modules. Post-translationally, cleaved and activated by C1R to generate Complement C1s subcomponent heavy and light chains. In terms of processing, the iron and 2-oxoglutarate dependent 3-hydroxylation of aspartate and asparagine is (R) stereospecific within EGF domains.

It is found in the secreted. It localises to the cell surface. The enzyme catalyses Cleavage of Arg-|-Ala bond in complement component C4 to form C4a and C4b, and Lys(or Arg)-|-Lys bond in complement component C2 to form C2a and C2b: the 'classical' pathway C3 convertase.. Cleaved and activated by C1R. Immunoglobulin-binding promotes autoactivation of C1R, which results in the cleavage of the Arg-Ile bond in the catalytic domain. Inhibited by C1 inhibitor (SERPING1). Its function is as follows. Component of the complement C1 complex, a multiprotein complex that initiates the classical pathway of the complement system, a cascade of proteins that leads to phagocytosis and breakdown of pathogens and signaling that strengthens the adaptive immune system. C1S is activated following association of the C1 complex with immunoglobulins (IgG or IgM) complexed with antigens to form antigen-antibody complexes on the surface of pathogens. C1S is cleaved and activated by C1R to generate C1s subcomponent heavy and light chains. C1s subcomponent light chain then cleaves and activates C2 and C4, the next components of the classical complement pathway. In terms of biological role, serine protease component of the complement C1 complex, which catalyzes cleavage and activation of C2 and C4, the next components of the classical complement pathway. Also able to cleave C1 inhibitor (SERPING1) in vitro; additional evidence is however required to confirm this result in vivo. Also cleaves IGFBP5 and thereby inhibits the trophic effects of IGF1. This Homo sapiens (Human) protein is Complement C1s subcomponent.